A 453-amino-acid polypeptide reads, in one-letter code: Homogentisate 1,2-dioxygenase (453 aa).

His306 acts as the Proton acceptor in catalysis. The Fe cation site is built by His349 and Glu355. Tyr364 and His385 together coordinate homogentisate. His385 is a Fe cation binding site.

The protein belongs to the homogentisate dioxygenase family. In terms of assembly, hexamer; dimer of trimers. Requires Fe cation as cofactor.

It carries out the reaction homogentisate + O2 = 4-maleylacetoacetate + H(+). Its pathway is amino-acid degradation; L-phenylalanine degradation; acetoacetate and fumarate from L-phenylalanine: step 4/6. Its function is as follows. Involved in the catabolism of homogentisate (2,5-dihydroxyphenylacetate or 2,5-OH-PhAc), a central intermediate in the degradation of phenylalanine and tyrosine. Catalyzes the oxidative ring cleavage of the aromatic ring of homogentisate to yield maleylacetoacetate. In Rhizobium etli (strain ATCC 51251 / DSM 11541 / JCM 21823 / NBRC 15573 / CFN 42), this protein is Homogentisate 1,2-dioxygenase.